The chain runs to 138 residues: Cysteine desulfuration protein SufE (138 aa).

Residue Cys-51 is the Cysteine persulfide intermediate of the active site.

This sequence belongs to the SufE family. Homodimer. Interacts with SufS.

It is found in the cytoplasm. It participates in cofactor biosynthesis; iron-sulfur cluster biosynthesis. Its function is as follows. Participates in cysteine desulfuration mediated by SufS. Cysteine desulfuration mobilizes sulfur from L-cysteine to yield L-alanine and constitutes an essential step in sulfur metabolism for biosynthesis of a variety of sulfur-containing biomolecules. Functions as a sulfur acceptor for SufS, by mediating the direct transfer of the sulfur atom from the S-sulfanylcysteine of SufS, an intermediate product of cysteine desulfuration process. This is Cysteine desulfuration protein SufE from Shigella sonnei (strain Ss046).